Here is a 537-residue protein sequence, read N- to C-terminus: MSTKYIFVTGGVVSSIGKGIVAASLGRLLKNRGLKVTIQKFDPYINIDPGTMSPYQHGEVFVTDDGAETDLDLGHYERFIDINLNKYSNVTTGKIYSEVLRKERKGEYLGATVQVIPHITDALKDKIKRAARTTDSDVIITEVGGTVGDIESLPFLEALRQMKADVGADNVMYIHTTLLPYLKAAGEMKTKPTQHSVKELRGLGIQPNMLVIRTEKPAGQNIKNKLAQFCDVAPEAVIESLDVEHLYQIPLDLQAQKMDQIVCDHLKLDVPAADMTEWSAMVEKVMSLEKQVRIALVGKYVELPDAYISVVEALKHAGYANDAEVKIDWIDANQVTVENAAELLGSADGIIVPGGFGQRGTEGKIQTIRYAREQDVPMLGVCLGMQLTCVEFARHVLGLADANSAELNPDTPFPIIDLMRDQIDVEDLGGTLRLGLYPSKLKSGSKAAAAYDHQEVVQRRHRHRYEFNNAFREQFEAAGFVFSGVSPDNRLVEIVEIPENKFFVACQYHPELSSRPNRPEGLYTAFVTAAVEKSSDR.

The segment at Met-1–Leu-268 is amidoligase domain. Ser-14 contributes to the CTP binding site. Ser-14 is a binding site for UTP. Ser-15 to Ile-20 is a binding site for ATP. Tyr-55 lines the L-glutamine pocket. Asp-72 serves as a coordination point for ATP. Residues Asp-72 and Glu-142 each coordinate Mg(2+). Residues Asp-149–Glu-151, Lys-189–Gln-194, and Lys-225 each bind CTP. Residues Lys-189–Gln-194 and Lys-225 each bind UTP. One can recognise a Glutamine amidotransferase type-1 domain in the interval Arg-293–Asp-536. Gly-355 is an L-glutamine binding site. Catalysis depends on Cys-382, which acts as the Nucleophile; for glutamine hydrolysis. L-glutamine contacts are provided by residues Leu-383–Gln-386, Glu-406, and Arg-464. Catalysis depends on residues His-509 and Glu-511.

This sequence belongs to the CTP synthase family. In terms of assembly, homotetramer.

The catalysed reaction is UTP + L-glutamine + ATP + H2O = CTP + L-glutamate + ADP + phosphate + 2 H(+). The enzyme catalyses L-glutamine + H2O = L-glutamate + NH4(+). It carries out the reaction UTP + NH4(+) + ATP = CTP + ADP + phosphate + 2 H(+). The protein operates within pyrimidine metabolism; CTP biosynthesis via de novo pathway; CTP from UDP: step 2/2. With respect to regulation, allosterically activated by GTP, when glutamine is the substrate; GTP has no effect on the reaction when ammonia is the substrate. The allosteric effector GTP functions by stabilizing the protein conformation that binds the tetrahedral intermediate(s) formed during glutamine hydrolysis. Inhibited by the product CTP, via allosteric rather than competitive inhibition. Its function is as follows. Catalyzes the ATP-dependent amination of UTP to CTP with either L-glutamine or ammonia as the source of nitrogen. Regulates intracellular CTP levels through interactions with the four ribonucleotide triphosphates. The protein is CTP synthase of Streptococcus sanguinis (strain SK36).